The chain runs to 350 residues: Formimidoylglutamase (350 aa).

Mn(2+) contacts are provided by His-130, Asp-165, His-167, Asp-169, Asp-269, and Asp-271.

Belongs to the arginase family. It depends on Mn(2+) as a cofactor.

The catalysed reaction is N-formimidoyl-L-glutamate + H2O = formamide + L-glutamate. The protein operates within amino-acid degradation; L-histidine degradation into L-glutamate; L-glutamate from N-formimidoyl-L-glutamate (hydrolase route): step 1/1. Its function is as follows. Catalyzes the conversion of N-formimidoyl-L-glutamate to L-glutamate and formamide. This is Formimidoylglutamase from Aliivibrio fischeri (strain ATCC 700601 / ES114) (Vibrio fischeri).